The following is a 425-amino-acid chain: Glutamate-1-semialdehyde 2,1-aminomutase (425 aa).

At Lys265 the chain carries N6-(pyridoxal phosphate)lysine.

Belongs to the class-III pyridoxal-phosphate-dependent aminotransferase family. HemL subfamily. Homodimer. Requires pyridoxal 5'-phosphate as cofactor.

Its subcellular location is the cytoplasm. The enzyme catalyses (S)-4-amino-5-oxopentanoate = 5-aminolevulinate. It participates in porphyrin-containing compound metabolism; protoporphyrin-IX biosynthesis; 5-aminolevulinate from L-glutamyl-tRNA(Glu): step 2/2. The sequence is that of Glutamate-1-semialdehyde 2,1-aminomutase from Clostridium perfringens (strain 13 / Type A).